Reading from the N-terminus, the 295-residue chain is MNPASTSHATLQGLLRHARQRLEAAEVDAPRLSAEIILCHALSLRRIDIMLTPDRIVEEADCILFSELVARRATGEPLAYIVGEKEFFGRDFAVNPSTLIPRPETEHLIETALESLRSGPARFVDAGTGSGCIAVTLCAERADLSGLALDMSAPALATASHNARRHGVAQRLAFVRGDFTTSLLRSGSLDLYASNPPYISEAEYTGLSREVRDFEPRSALVPGDTGLEHAAAIIAEATRVLRPHGILLMEFGCMQGADMASLFTPYSTLWEMVEVRRDLAGLDRFIFARRNLLQP.

S-adenosyl-L-methionine is bound by residues 127-131 (GTGSG), Asp150, Phe179, and Asn195. 195 to 198 (NPPY) lines the substrate pocket.

It belongs to the protein N5-glutamine methyltransferase family. PrmC subfamily.

It catalyses the reaction L-glutaminyl-[peptide chain release factor] + S-adenosyl-L-methionine = N(5)-methyl-L-glutaminyl-[peptide chain release factor] + S-adenosyl-L-homocysteine + H(+). In terms of biological role, methylates the class 1 translation termination release factors RF1/PrfA and RF2/PrfB on the glutamine residue of the universally conserved GGQ motif. The protein is Release factor glutamine methyltransferase of Nitratidesulfovibrio vulgaris (strain ATCC 29579 / DSM 644 / CCUG 34227 / NCIMB 8303 / VKM B-1760 / Hildenborough) (Desulfovibrio vulgaris).